A 440-amino-acid polypeptide reads, in one-letter code: Tetratricopeptide repeat protein 5 (440 aa).

5 TPR repeats span residues 7–61 (EEVK…EEVV), 68–98 (AQVLMLTGKALNVTPDYSPKAEELLSKAVKL), 103–130 (VEAWNQLGEVYWKKGDVAAAHTCFSGAL), 136–174 (KVSLQNLSMVLRQLRTDTEDEHSHHVMDSVRQAKLAVQM), and 179–216 (GRSWYILGNSYLSLYFSTGQNPKISQQALSAYAQAEKV). The short motif at 13-24 (LQKLQELVDQLY) is the Nuclear export signal element. Position 203 is a phosphoserine; by ATM (S203). Residue S221 is modified to Phosphoserine; by CHEK2. A TPR 6 repeat occupies 224–253 (PDLHLNRATLHKYEESYGEALEGFSRAAAL). Residues 285–287 (KTK) are mediates interaction with 28S rRNA of ribosome-coding tubulin.

Interacts with JMY and p300/EP300; the interaction occurs in the nucleus and augments the association between JMY and p300/EP300 in response to DNA damage. Forms a complex with HSF1 and p300/EP300; these interactions augment chromatin-bound HSF1 and p300/EP300 histone acetyltransferase activity, resulting in enhanced heat-shock-responsive transcription. Interacts with PRMT5; the interaction is DNA damage-dependent and promotes PRMT5 interaction with p53/TP53 and subsequent methylation. Interacts with JMY; the interaction occurs in the cytoplasm and results in the inhibition of JYM's nucleation activity. Interacts with ribosome-coding tubulin (via 60S subunit 28S rRNA and protein uL24/RPL26) and the N-terminal of nascent tubulin polypeptide (via alpha-tubulin MREC motif and beta-tubulin MREI motif); these interactions result in tubulin mRNA-targeted degradation. Interacts with ATP5F1B; the interaction occurs in the mitochondria and results in ATP production decrease. Interacts with p53/TP53; the interaction occurs in the mitochondria and results in increased apoptosis. Phosphorylation by ATM kinase induces nuclear accumulation while interfering with nuclear export, and phosphorylation by CHEK2 kinase enhances nuclear stability.

Its subcellular location is the nucleus. It localises to the cytoplasm. The protein resides in the cytoplasmic vesicle. The protein localises to the mitochondrion matrix. Functionally, cofactor involved in the regulation of various cellular mechanisms such as actin regulation, autophagy, chromatin regulation and DNA repair. In non-stress conditions, interacts with cofactor JMY in the cytoplasm which prevents JMY's actin nucleation activity and ability to activate the Arp2/3 complex. Acts as a negative regulator of nutrient stress-induced autophagy by preventing JMY's interaction with MAP1LC3B, thereby preventing autophagosome formation. Involves in tubulin autoregulation by promoting its degradation in response to excess soluble tubulin. To do so, associates with the active ribosome near the ribosome exit tunnel and with nascent tubulin polypeptides early during their translation, triggering tubulin mRNA-targeted degradation. Following DNA damage, phosphorylated by DNA damage responsive protein kinases ATM and CHEK2, leading to its nuclear accumulation and stability. Nuclear TTC5/STRAP promotes the assembly of a stress-responsive p53/TP53 coactivator complex, which includes the coactivators JMY and p300, thereby increasing p53/TP53-dependent transcription and apoptosis. Also recruits arginine methyltransferase PRMT5 to p53/TP53 when DNA is damaged, allowing PRMT5 to methylate p53/TP53. In DNA stress conditions, also prevents p53/TP53 degradation by E3 ubiquitin ligase MDM2. Upon heat-shock stress, forms a chromatin-associated complex with heat-shock factor 1 HSF1 and p300/EP300 to stimulate heat-shock-responsive transcription, thereby increasing cell survival. Mitochondrial TTC5/STRAP interacts with ATP synthase subunit beta ATP5F1B which decreased ATP synthase activity and lowers mitochondrial ATP production, thereby regulating cellular respiration and mitochondrial-dependent apoptosis. Mitochondrial TTC5/STRAP also regulates p53/TP53-mediated apoptosis. The polypeptide is Tetratricopeptide repeat protein 5 (Homo sapiens (Human)).